A 278-amino-acid chain; its full sequence is Digeranylgeranylglyceryl phosphate synthase (278 aa).

8 helical membrane passes run 17–37 (MASF…LEMV), 40–60 (LIFA…LNDI), 91–111 (LLVF…LMAV), 129–149 (IIGN…GGIA), 153–173 (IDVT…REII), 204–224 (LLLV…FFGI), 226–246 (YLIS…PLLI), and 257–277 (SRNI…GSFF).

This sequence belongs to the UbiA prenyltransferase family. DGGGP synthase subfamily. Requires Mg(2+) as cofactor.

The protein localises to the cell membrane. It carries out the reaction sn-3-O-(geranylgeranyl)glycerol 1-phosphate + (2E,6E,10E)-geranylgeranyl diphosphate = 2,3-bis-O-(geranylgeranyl)-sn-glycerol 1-phosphate + diphosphate. It functions in the pathway membrane lipid metabolism; glycerophospholipid metabolism. Its function is as follows. Prenyltransferase that catalyzes the transfer of the geranylgeranyl moiety of geranylgeranyl diphosphate (GGPP) to the C2 hydroxyl of (S)-3-O-geranylgeranylglyceryl phosphate (GGGP). This reaction is the second ether-bond-formation step in the biosynthesis of archaeal membrane lipids. The protein is Digeranylgeranylglyceryl phosphate synthase of Methanococcus maripaludis (strain C5 / ATCC BAA-1333).